The primary structure comprises 334 residues: Ribosomal RNA large subunit methyltransferase F (334 aa).

Residues 1 to 25 are disordered; it reads MPRPSSPRPDAERKSASPLHPRNRH.

Belongs to the methyltransferase superfamily. METTL16/RlmF family.

It is found in the cytoplasm. It catalyses the reaction adenosine(1618) in 23S rRNA + S-adenosyl-L-methionine = N(6)-methyladenosine(1618) in 23S rRNA + S-adenosyl-L-homocysteine + H(+). Specifically methylates the adenine in position 1618 of 23S rRNA. The protein is Ribosomal RNA large subunit methyltransferase F of Pseudomonas paraeruginosa (strain DSM 24068 / PA7) (Pseudomonas aeruginosa (strain PA7)).